A 786-amino-acid polypeptide reads, in one-letter code: Phenylalanine--tRNA ligase beta subunit (786 aa).

Positions 39 to 150 constitute a tRNA-binding domain; it reads LRAPDRVVVG…GELKLGKPLH (112 aa). The B5 domain occupies 397–474; the sequence is YKPATITVDL…RLLGIDTILA (78 aa). The Mg(2+) site is built by Asp-452, Asp-458, Glu-461, and Glu-462. One can recognise an FDX-ACB domain in the interval 693 to 786; the sequence is SKFPKLQRDL…LNHRFGAKLR (94 aa).

It belongs to the phenylalanyl-tRNA synthetase beta subunit family. Type 1 subfamily. Tetramer of two alpha and two beta subunits. Mg(2+) is required as a cofactor.

The protein localises to the cytoplasm. It catalyses the reaction tRNA(Phe) + L-phenylalanine + ATP = L-phenylalanyl-tRNA(Phe) + AMP + diphosphate + H(+). This Wolinella succinogenes (strain ATCC 29543 / DSM 1740 / CCUG 13145 / JCM 31913 / LMG 7466 / NCTC 11488 / FDC 602W) (Vibrio succinogenes) protein is Phenylalanine--tRNA ligase beta subunit.